A 299-amino-acid chain; its full sequence is MPT51/MPB51 antigen (299 aa).

An N-terminal signal peptide occupies residues 1 to 26 (MKGRSALLRALWIAALSFGLGGVAVA).

The protein belongs to the mycobacterial A85 antigen family. Homodimer.

It localises to the secreted. May have a role in host tissue attachment, whereby ligands may include the serum protein fibronectin and small sugars. This is MPT51/MPB51 antigen (mpt51) from Mycobacterium bovis (strain ATCC BAA-935 / AF2122/97).